The primary structure comprises 239 residues: UPF0502 protein Bcen_5249 (239 aa).

Positions 196 to 239 (IRGAKGRTEAPRGRSGATQCAGSTDGERTRHRRRRTGRRVLIAS) are disordered. Residues 224-233 (TRHRRRRTGR) show a composition bias toward basic residues.

This sequence belongs to the UPF0502 family.

In Burkholderia orbicola (strain AU 1054), this protein is UPF0502 protein Bcen_5249.